Reading from the N-terminus, the 971-residue chain is Piwi-like protein 2 (971 aa).

At R45 the chain carries Symmetric dimethylarginine. R74 bears the Omega-N-methylarginine; by PRMT5; alternate mark. The residue at position 74 (R74) is a Symmetric dimethylarginine; by PRMT5; alternate. Omega-N-methylarginine; alternate is present on R83. R83 and R95 each carry symmetric dimethylarginine; alternate. An Omega-N-methylarginine; by PRMT5; alternate modification is found at R95. Position 100 is a symmetric dimethylarginine; by PRMT5; alternate (R100). The residue at position 100 (R100) is an Omega-N-methylarginine; alternate. Residues 102–124 are disordered; sequence LSANMVRKDREEPRSSLPDPSVL. Symmetric dimethylarginine is present on residues R144 and R156. The interval 159–200 is disordered; that stretch reads SSIGRGMDKPPSAFGLTARDPPRLPQPPALSPTSLHSADPPP. The residue at position 163 (R163) is a Symmetric dimethylarginine; by PRMT5. In terms of domain architecture, PAZ spans 387–500; sequence SVLDVMHAIY…LLPELSFMTG (114 aa). Position 549 is a symmetric dimethylarginine; by PRMT5 (R549). One can recognise a Piwi domain in the interval 666 to 957; that stretch reads MVVCIIMGTR…LAFLSGQILH (292 aa). Active-site residues include D743, E781, D813, and H946.

Belongs to the argonaute family. Piwi subfamily. In terms of assembly, interacts with DDX4, MAEL, EIF3A, EIF4E, EIF4G, PRMT5 and WDR77. Associates with EIF4E- and EIF4G-containing m7G cap-binding complexes. Interacts (when methylated on arginine residues) with TDRD1 and TDRKH/TDRD2. Interacts with TDRD12. Component of the PET complex, at least composed of EXD1, PIWIL2, TDRD12 and piRNAs. Interacts with MOV10L1. Interacts with GPAT2. Interacts with Tex19.1 and, probably, Tex19.2. Interacts (via PIWI domain) with BMAL1 and CLOCK. Interacts with GSK3B. Interacts with TEX15. The cofactor is Mg(2+). In terms of processing, arginine methylation by PRMT5 is required for the interaction with Tudor domain-containing protein TDRD1 and subsequent localization to the meiotic nuage, also named P granule. In terms of tissue distribution, expressed in adult testis, specifically in spermatocytes and in spermatogonia. Only detected in primordial germ cells of both sexes. Widely expressed in tumors. Also present at early stages of oocyte growth. Present in the mitotic spermatogonia. Not detected in the first stages of meiosis (preleptotene and leptotene). Detected at the late zygotene stage and increases throughout pachytene, declining from this stage onward until expression stops at the early round spermatid stage (at protein level).

The protein localises to the cytoplasm. In terms of biological role, endoribonuclease that plays a central role during spermatogenesis by repressing transposable elements and preventing their mobilization, which is essential for the germline integrity. Plays an essential role in meiotic differentiation of spermatocytes, germ cell differentiation and in self-renewal of spermatogonial stem cells. Its presence in oocytes suggests that it may participate in similar functions during oogenesis in females. Acts via the piRNA metabolic process, which mediates the repression of transposable elements during meiosis by forming complexes composed of piRNAs and Piwi proteins and govern the methylation and subsequent repression of transposons. During piRNA biosynthesis, plays a key role in the piRNA amplification loop, also named ping-pong amplification cycle, by acting as a 'slicer-competent' piRNA endoribonuclease that cleaves primary piRNAs, which are then loaded onto 'slicer-incompetent' PIWIL4. PIWIL2 slicing produces a pre-miRNA intermediate, which is then processed in mature piRNAs, and as well as a 16 nucleotide by-product that is degraded. Required for PIWIL4/MIWI2 nuclear localization and association with secondary piRNAs antisense. Besides their function in transposable elements repression, piRNAs are probably involved in other processes during meiosis such as translation regulation. Indirectly modulates expression of genes such as PDGFRB, SLC2A1, ITGA6, GJA7, THY1, CD9 and STRA8. Represses circadian rhythms by promoting the stability and activity of core clock components BMAL1 and CLOCK by inhibiting GSK3B-mediated phosphorylation and ubiquitination-dependent degradation of these proteins. This chain is Piwi-like protein 2, found in Mus musculus (Mouse).